The chain runs to 1284 residues: 1,6-alpha-glucosyltransferase (1284 aa).

The N-terminal stretch at 1–35 (MRPPNKEIPRILAFFTAFTLFGSTLALLPAPPAHA) is a signal peptide. Asp433 acts as the Nucleophile in catalysis. The active site involves Asp436. Catalysis depends on Asp495, which acts as the Proton donor. 2 consecutive CBM6 domains span residues 856 to 988 (SQYE…ITVP) and 994 to 1120 (GKYE…LLLS).

The protein belongs to the glycosyl hydrolase 31 family.

The protein localises to the secreted. It carries out the reaction 2 D-maltotetraose = alpha-isomaltosyl-(1-&gt;4)-D-maltotriose + D-maltotriose. The catalysed reaction is Transfers an alpha-D-glucosyl residue in a (1-&gt;4)-alpha-D-glucan to the primary hydroxy group of glucose, free or combined in a (1-&gt;4)-alpha-D-glucan.. With respect to regulation, strongly activated and stabilized by various divalent cations. Strongly inhibited by Cu(2+), Hg(2+) and EDTA, and moderately inhibited by Tris. Glycosyltransferase involved, together with CtsY, in the conversion of alpha-1,4-glucan into a cyclic tetrasaccharide (CTS) constructed from four alpha-glucopyranosyl residues. Catalyzes an intermolecular transglucosylation in which a glucose residue at the non-reducing end of maltotetraose is transferred to the 6-OH of an other non-reducing glucose, leading to the formation of alpha-isomaltosyl-(1-&gt;4)-D-maltotriose. Has a wide substrate specificity, and acts on oligosaccharides with alpha-1,4-glucosidic linkages at the non-reducing end, except for maltose. In contrast, has little activity toward oligosaccharides with alpha-1,6-glucosidic linkages at the non-reducing end. This is 1,6-alpha-glucosyltransferase from Sporosarcina globispora (Bacillus globisporus).